The sequence spans 229 residues: Cytidylate kinase (229 aa).

Residue 12 to 20 (GPSGSGKGT) participates in ATP binding.

The protein belongs to the cytidylate kinase family. Type 1 subfamily.

It localises to the cytoplasm. It catalyses the reaction CMP + ATP = CDP + ADP. The enzyme catalyses dCMP + ATP = dCDP + ADP. This Pseudomonas syringae pv. syringae (strain B728a) protein is Cytidylate kinase.